Here is a 323-residue protein sequence, read N- to C-terminus: Pathogenicity locus probable regulatory protein WtsA (323 aa).

Positions 41–251 (VAPLEIDLVL…ELKTAAKRFT (211 aa)) constitute a Sigma-54 factor interaction domain. ATP is bound by residues 52-59 (GETGTGKD) and 123-132 (EIDSMPLSLQ). The H-T-H motif DNA-binding region spans 293-312 (IDEAAMELGMPLRTLYHRIK).

Its function is as follows. Positive activator of wtsB involved in plant pathogenicity. Probably interacts with sigma-54. This Pantoea stewartii subsp. stewartii (Erwinia stewartii) protein is Pathogenicity locus probable regulatory protein WtsA (wtsA).